Here is a 475-residue protein sequence, read N- to C-terminus: Peroxisome proliferator-activated receptor gamma (475 aa).

S82 is modified (phosphoserine; by MAPK). Residues 106-180 (AIECRVCSDK…VGMSHNAIRF (75 aa)) constitute a DNA-binding region (nuclear receptor). 2 consecutive NR C4-type zinc fingers follow at residues 109-129 (CRVC…CEGC) and 146-168 (CDLN…FQKC). Residues 175–250 (HNAIRFGRMP…DKSPFVIYDM (76 aa)) are interaction with FAM120B. Positions 208 to 473 (DLRALAKHLY…HPLLQEIYKD (266 aa)) constitute an NR LBD domain. A Glycyl lysine isopeptide (Lys-Gly) (interchain with G-Cter in ubiquitin) cross-link involves residue K222. Positions 465-473 (PLLQEIYKD) match the 9aaTAD motif.

Belongs to the nuclear hormone receptor family. NR1 subfamily. Interacts with FOXO1 (acetylated form). Heterodimer with other nuclear receptors, such as RXRA. The heterodimer with the retinoic acid receptor RXRA is called adipocyte-specific transcription factor ARF6. Interacts with NCOA6 coactivator, leading to a strong increase in transcription of target genes. Interacts with coactivator PPARBP, leading to a mild increase in transcription of target genes. Interacts with NOCA7 in a ligand-inducible manner. Interacts with NCOA1 and NCOA2 LXXLL motifs. Interacts with ASXL1, ASXL2, DNTTIP2, FAM120B, MAP2K1/MEK1, NR0B2, PDPK1, PRDM16, PRMT2 and TGFB1I1. Interacts (when activated by agonist) with PPP5C. Interacts with HELZ2 and THRAP3; the interaction stimulates the transcriptional activity of PPARG. Interacts with PER2, the interaction is ligand dependent and blocks PPARG recruitment to target promoters. Interacts with NOCT. Interacts with ACTN4. Interacts (when in the liganded conformation) with GPS2. Interacts with CRY1 and CRY2 in a ligand-dependent manner. In the absence of hormonal ligand, interacts with TACC1. In macrophages, interacts with PAQR3 and STUB1; the interactions promote PPARG poylubiquitination and STUB1-mediated degradation. Post-translationally, phosphorylated at basal conditions and dephosphorylated when treated with the ligand. May be dephosphorylated by PPP5C. The phosphorylated form may be inactive and dephosphorylation induces adipogenic activity. Ubiquitinated by E3 ubiquitin-protein ligase complex containing FBXO9; leading to proteasomal degradation. Ubiquitinated at Lys-222 by TRIM55 leading to proteasomal degradation. Ubiquitinated by E3 ubiquitin-protein ligase STUB1/CHIP; leading to proteasomal degradation.

It is found in the nucleus. It localises to the cytoplasm. With respect to regulation, PDPK1 activates its transcriptional activity independently of its kinase activity. Functionally, nuclear receptor that binds peroxisome proliferators such as hypolipidemic drugs and fatty acids. Once activated by a ligand, the nuclear receptor binds to DNA specific PPAR response elements (PPRE) and modulates the transcription of its target genes, such as acyl-CoA oxidase. It therefore controls the peroxisomal beta-oxidation pathway of fatty acids. Key regulator of adipocyte differentiation and glucose homeostasis. ARF6 acts as a key regulator of the tissue-specific adipocyte P2 (aP2) enhancer. Acts as a critical regulator of gut homeostasis by suppressing NF-kappa-B-mediated pro-inflammatory responses. Plays a role in the regulation of cardiovascular circadian rhythms by regulating the transcription of BMAL1 in the blood vessels. This is Peroxisome proliferator-activated receptor gamma (PPARG) from Oryctolagus cuniculus (Rabbit).